The chain runs to 61 residues: uncharacterized protein (61 aa).

The stretch at 24 to 60 (WMRYESERDEKLRMLERMRDELEAELEEIKREIERLR) forms a coiled coil.

This is an uncharacterized protein from Archaeoglobus fulgidus (strain ATCC 49558 / DSM 4304 / JCM 9628 / NBRC 100126 / VC-16).